Here is a 576-residue protein sequence, read N- to C-terminus: Beta-bisabolene synthase (576 aa).

Residues R286, D323, D327, R466, and N469 each contribute to the (2E,6E)-farnesyl diphosphate site. Mg(2+)-binding residues include D323 and D327. The DDXXD motif signature appears at 323-327 (DDVYD). Mg(2+) contacts are provided by N469, T473, and E477.

It belongs to the terpene synthase family. Tpsb subfamily. Mg(2+) is required as a cofactor. Requires Mn(2+) as cofactor.

Functionally, produces almost exclusively beta-bisabolene and only traces of alpha-bisabolol from (2E,6E)-farnesyl diphosphate in fragrance biosynthesis. The chain is Beta-bisabolene synthase from Santalum austrocaledonicum (Sandalwood).